The following is a 263-amino-acid chain: HTH-type transcriptional repressor NanR (263 aa).

Residues 30-98 (KKLSEMVEEE…NGERARVSRP (69 aa)) form the HTH gntR-type domain. The segment at residues 58–77 (ERELMAFFNVGRPSVREALA) is a DNA-binding region (H-T-H motif).

It belongs to the NanR family.

Its function is as follows. Transcriptional repressor that controls expression of the genes required for the catabolism of sialic acids. The protein is HTH-type transcriptional repressor NanR of Salmonella bongori (strain ATCC 43975 / DSM 13772 / NCTC 12419).